The primary structure comprises 490 residues: ATP synthase subunit beta, chloroplastic (490 aa).

170-177 provides a ligand contact to ATP; that stretch reads GGAGVGKT.

The protein belongs to the ATPase alpha/beta chains family. As to quaternary structure, F-type ATPases have 2 components, CF(1) - the catalytic core - and CF(0) - the membrane proton channel. CF(1) has five subunits: alpha(3), beta(3), gamma(1), delta(1), epsilon(1). CF(0) has four main subunits: a(1), b(1), b'(1) and c(9-12).

Its subcellular location is the plastid. It localises to the chloroplast thylakoid membrane. The catalysed reaction is ATP + H2O + 4 H(+)(in) = ADP + phosphate + 5 H(+)(out). In terms of biological role, produces ATP from ADP in the presence of a proton gradient across the membrane. The catalytic sites are hosted primarily by the beta subunits. The sequence is that of ATP synthase subunit beta, chloroplastic from Calystegia sepium (Hedge bindweed).